The sequence spans 687 residues: Leucine-rich repeat and fibronectin type III domain-containing protein 1-like protein (687 aa).

An N-terminal signal peptide occupies residues 1 to 17 (MEWLIFSLLLLAVSASG). Residues 18–51 (QLCPKRCMCQNLSPSLAILCAKTGLLFVPTVIDR) enclose the LRRNT domain. Topologically, residues 18–527 (QLCPKRCMCQ…LRSHFLGGTM (510 aa)) are extracellular. 7 LRR repeats span residues 52–73 (RTVE…DFAN), 76–97 (SLLH…TFAD), 100–121 (RLRA…HFRG), 124–145 (NLRH…AFDD), 149–170 (TLED…TIGR), 173–194 (NVNT…IFSN), and 197–218 (KLAR…PLFL). An N-linked (GlcNAc...) asparagine glycan is attached at asparagine 73. An LRRCT domain is found at 241-287 (NPLHCNCELLWLRRLTREDDLETCASPPDLTAKYFWTIPEEEFICDP). One can recognise an Ig-like domain in the interval 287 to 376 (PPVITRKSPK…STGTVELVVS (90 aa)). Cysteine 309 and cysteine 358 are joined by a disulfide. 6 N-linked (GlcNAc...) asparagine glycosylation sites follow: asparagine 331, asparagine 340, asparagine 346, asparagine 383, asparagine 410, and asparagine 450. Positions 384–412 (STNRIREPDPGPSDILTSAKSTSSVSNET) are disordered. Residues 398–412 (ILTSAKSTSSVSNET) show a composition bias toward polar residues. The region spanning 415–510 (QERKVVLAEL…VGCVTFVTET (96 aa)) is the Fibronectin type-III domain. The chain crosses the membrane as a helical span at residues 528–548 (IIIIGGIIVASVLVFIIILMI). The Cytoplasmic segment spans residues 549-687 (RYKVYSQHGA…AQRDWSDFKI (139 aa)). Disordered regions lie at residues 563–601 (GTAM…GSLG) and 630–687 (EDIV…DFKI). Polar residues-rich tracts occupy residues 565-576 (AMTNVRSQTNGG) and 657-672 (EGTS…SPQV). Positions 673–687 (SDEKKAQRDWSDFKI) are enriched in basic and acidic residues.

The protein belongs to the LRFN family.

It localises to the membrane. The protein localises to the synapse. May be involved in the regulation of excitatory synapses. In Danio rerio (Zebrafish), this protein is Leucine-rich repeat and fibronectin type III domain-containing protein 1-like protein (lrfn1l).